Reading from the N-terminus, the 206-residue chain is Uracil phosphoribosyltransferase (206 aa).

Residues Arg76, Arg101, and 128–136 (DPMLATGTT) each bind 5-phospho-alpha-D-ribose 1-diphosphate. Residues Ile191 and 196 to 198 (GDA) each bind uracil. Asp197 lines the 5-phospho-alpha-D-ribose 1-diphosphate pocket.

This sequence belongs to the UPRTase family. It depends on Mg(2+) as a cofactor.

It catalyses the reaction UMP + diphosphate = 5-phospho-alpha-D-ribose 1-diphosphate + uracil. The protein operates within pyrimidine metabolism; UMP biosynthesis via salvage pathway; UMP from uracil: step 1/1. Allosterically activated by GTP. Its function is as follows. Catalyzes the conversion of uracil and 5-phospho-alpha-D-ribose 1-diphosphate (PRPP) to UMP and diphosphate. This is Uracil phosphoribosyltransferase from Mycoplasma genitalium (strain ATCC 33530 / DSM 19775 / NCTC 10195 / G37) (Mycoplasmoides genitalium).